The chain runs to 180 residues: Large ribosomal subunit protein uL10 (180 aa).

It belongs to the universal ribosomal protein uL10 family. In terms of assembly, part of the ribosomal stalk of the 50S ribosomal subunit. The N-terminus interacts with L11 and the large rRNA to form the base of the stalk. The C-terminus forms an elongated spine to which L12 dimers bind in a sequential fashion forming a multimeric L10(L12)X complex.

Forms part of the ribosomal stalk, playing a central role in the interaction of the ribosome with GTP-bound translation factors. This Thermosipho melanesiensis (strain DSM 12029 / CIP 104789 / BI429) protein is Large ribosomal subunit protein uL10.